The primary structure comprises 535 residues: Sodium/hydrogen exchanger 9B2 (535 aa).

Positions 1–14 are enriched in basic and acidic residues; sequence MRNQDKRAAHKDSE. The tract at residues 1-70 is disordered; it reads MRNQDKRAAH…TPAEPNHLQR (70 aa). Residues 1 to 85 are Cytoplasmic-facing; it reads MRNQDKRAAH…ACPPRGLLAR (85 aa). Composition is skewed to polar residues over residues 16 to 34 and 46 to 58; these read STEVNHTASSYQGRQQETG and TEGSNLLNNNEKM. Residues 86-103 traverse the membrane as a helical segment; sequence VITNVTMVILLWAVVWSV. The Extracellular segment spans residues 104–112; the sequence is TGSECLPGG. The helical transmembrane segment at 113 to 132 threads the bilayer; that stretch reads NLFGIIMLFYCAIIGGKLFG. Residues 133-143 lie on the Cytoplasmic side of the membrane; sequence LIKLPTLPPLP. The chain crosses the membrane as a helical span at residues 144–160; it reads PLLGMLLAGFLIRNVPV. The Extracellular portion of the chain corresponds to 161-170; the sequence is ISDNIQIKHK. A helical membrane pass occupies residues 171–188; it reads WSSALRSIALSVILVRAG. Residues 189 to 199 lie on the Cytoplasmic side of the membrane; that stretch reads LGLDSNALKKL. The helical transmembrane segment at 200–226 threads the bilayer; sequence KGVCVRLSLGPCLIEACTSAVLAYFLM. At 227–232 the chain is on the extracellular side; that stretch reads GLPWQW. The helical transmembrane segment at 233–241 threads the bilayer; that stretch reads GFMLGFVLG. Residues 242-269 are Cytoplasmic-facing; it reads AVSPAVVVPSMLLLQEGGYGVEKGIPTL. Na(+)-binding residues include Val243, Gly274, Asp277, and Asp278. A helical transmembrane segment spans residues 270–289; the sequence is LMAAGSFDDILAITGFNTCL. The Extracellular portion of the chain corresponds to 290–299; that stretch reads GMAFSTGSTV. Residues 300–323 form a helical membrane-spanning segment; the sequence is FNVLKGVLEVIIGVVTGLVLGFFI. Over 324-338 the chain is Cytoplasmic; it reads QYFPSSDQDNLVWKR. The helical transmembrane segment at 339–356 threads the bilayer; that stretch reads AFLVLGLSVLAVFSSTYF. Topologically, residues 357–360 are extracellular; the sequence is GFPG. A helical transmembrane segment spans residues 361 to 372; it reads SGGLCTLVTAFL. The Cytoplasmic portion of the chain corresponds to 373–389; it reads AGRGWASTKTDVEKVIA. Residues 390 to 410 traverse the membrane as a helical segment; sequence VAWDIFQPLLFGLIGAEVLIT. Residues 411–416 lie on the Extracellular side of the membrane; it reads ALRPET. The helical transmembrane segment at 417-439 threads the bilayer; that stretch reads IGLCVATLGIAVLIRILVTYLMV. Residues 440 to 460 are Cytoplasmic-facing; that stretch reads CFAGFNIKEKIFISFAWLPKA. A helical transmembrane segment spans residues 461–472; that stretch reads TVQAAIGSVALD. The Extracellular portion of the chain corresponds to 473-485; the sequence is TARSHGEKQLEGY. The helical transmembrane segment at 486-508 threads the bilayer; it reads GMDVLTVAFLSIIITAPVGSLLI. At 509–535 the chain is on the cytoplasmic side; the sequence is GLLGPRLLQKAEQNKDEEDQGETSIQV.

Belongs to the monovalent cation:proton antiporter 1 (CPA1) transporter (TC 2.A.36) family. In terms of assembly, homodimer; dimerization is essential for SLC9B2 activity. Lipids seem to play a role in the stabilization of the dimerization subdomain.

Its subcellular location is the cell membrane. It is found in the mitochondrion membrane. The protein resides in the endosome membrane. It localises to the recycling endosome membrane. The protein localises to the lysosome membrane. Its subcellular location is the cytoplasmic vesicle. It is found in the secretory vesicle. The protein resides in the synaptic vesicle membrane. It localises to the cell projection. The protein localises to the cilium. Its subcellular location is the flagellum membrane. It is found in the basolateral cell membrane. The protein resides in the apical cell membrane. The catalysed reaction is Li(+)(out) + H(+)(in) = Li(+)(in) + H(+)(out). It carries out the reaction Li(+)(in) + Na(+)(out) = Li(+)(out) + Na(+)(in). It catalyses the reaction Na(+)(in) + H(+)(out) = Na(+)(out) + H(+)(in). Allosterically inhibited by the N-terminal domain. Inhibited by phloretin. Its function is as follows. Electroneutral Na(+) Li(+)/H(+) antiporter that extrudes Na(+) or Li(+) in exchange for external protons across the membrane. Uses the proton gradient/membrane potential to extrude sodium. Contributes to the regulation of intracellular pH and sodium homeostasis. Also able to mediate Na(+)/Li(+) antiporter activity in kidney. May play a physiological role in renal tubular function and blood pressure homeostasis. Plays an important role for insulin secretion and clathrin-mediated endocytosis in beta-cells. Involved in sperm motility and fertility. It is controversial whether SLC9B2 plays a role in osteoclast differentiation or not. The polypeptide is Sodium/hydrogen exchanger 9B2 (SLC9B2) (Bison bison bison (North American plains bison)).